A 217-amino-acid polypeptide reads, in one-letter code: Killer cell lectin-like receptor subfamily B member 1F (217 aa).

The Cytoplasmic portion of the chain corresponds to 1–45 (MDTSKVHGNVKPFRCPGYKQASSPSFSPDACRCPHWHHLALKSGC). An LCK-binding motif motif is present at residues 31–34 (CRCP). The helical; Signal-anchor for type II membrane protein transmembrane segment at 46-66 (AGLILLLLSLIGLSVLVRFLV) threads the bilayer. Topologically, residues 67 to 217 (QKPPIEKCSV…WICQKTLIHV (151 aa)) are extracellular. A glycan (N-linked (GlcNAc...) asparagine) is linked at N81. Residues 101–211 (HWNKCLFVSQ…CSSDNHWICQ (111 aa)) enclose the C-type lectin domain. 2 disulfide bridges follow: C122-C210 and C189-C202.

In terms of tissue distribution, highly expressed in dendritic cells. Detectable in natural killer cells.

It is found in the membrane. Its function is as follows. Binds CLEC2I/Clr-g leading to activation of natural killer cells or costimulation of IL-2 production and proliferation of T-cells in response to antigen stimulation. May contribute to the formation of the immunological synapse between T-cells and antigen-presenting dendritic cells. This chain is Killer cell lectin-like receptor subfamily B member 1F (Klrb1f), found in Mus musculus (Mouse).